Here is an 815-residue protein sequence, read N- to C-terminus: 1,4-alpha-glucan branching enzyme GlgB (815 aa).

Catalysis depends on Asp405, which acts as the Nucleophile. Glu458 serves as the catalytic Proton donor.

This sequence belongs to the glycosyl hydrolase 13 family. GlgB subfamily. In terms of assembly, monomer.

It catalyses the reaction Transfers a segment of a (1-&gt;4)-alpha-D-glucan chain to a primary hydroxy group in a similar glucan chain.. The protein operates within glycan biosynthesis; glycogen biosynthesis. In terms of biological role, catalyzes the formation of the alpha-1,6-glucosidic linkages in glycogen by scission of a 1,4-alpha-linked oligosaccharide from growing alpha-1,4-glucan chains and the subsequent attachment of the oligosaccharide to the alpha-1,6 position. In Histophilus somni (strain 2336) (Haemophilus somnus), this protein is 1,4-alpha-glucan branching enzyme GlgB.